We begin with the raw amino-acid sequence, 282 residues long: Phosphate import ATP-binding protein PstB (282 aa).

Residues 36–277 enclose the ABC transporter domain; that stretch reads IEVKNLNFFY…PARKETEDYI (242 aa). An ATP-binding site is contributed by 68 to 75; sequence GPSGCGKS.

This sequence belongs to the ABC transporter superfamily. Phosphate importer (TC 3.A.1.7) family. In terms of assembly, the complex is composed of two ATP-binding proteins (PstB), two transmembrane proteins (PstC and PstA) and a solute-binding protein (PstS).

The protein resides in the cell inner membrane. The enzyme catalyses phosphate(out) + ATP + H2O = ADP + 2 phosphate(in) + H(+). Part of the ABC transporter complex PstSACB involved in phosphate import. Responsible for energy coupling to the transport system. The protein is Phosphate import ATP-binding protein PstB of Burkholderia pseudomallei (strain 1710b).